Consider the following 666-residue polypeptide: Transketolase (666 aa).

H26 is a substrate binding site. Residues H66 and 114-116 (GPL) contribute to the thiamine diphosphate site. D155 is a Mg(2+) binding site. The thiamine diphosphate site is built by G156 and N185. Mg(2+) is bound by residues N185 and I187. Substrate is bound by residues H261, R358, and S385. Residue H261 participates in thiamine diphosphate binding. The active-site Proton donor is E411. Thiamine diphosphate is bound at residue F437. Residues H461, D469, and R520 each contribute to the substrate site.

This sequence belongs to the transketolase family. In terms of assembly, homodimer. Mg(2+) serves as cofactor. It depends on Ca(2+) as a cofactor. Requires Mn(2+) as cofactor. The cofactor is Co(2+). Thiamine diphosphate is required as a cofactor.

It catalyses the reaction D-sedoheptulose 7-phosphate + D-glyceraldehyde 3-phosphate = aldehydo-D-ribose 5-phosphate + D-xylulose 5-phosphate. Functionally, catalyzes the transfer of a two-carbon ketol group from a ketose donor to an aldose acceptor, via a covalent intermediate with the cofactor thiamine pyrophosphate. The sequence is that of Transketolase (tkt) from Buchnera aphidicola subsp. Baizongia pistaciae (strain Bp).